We begin with the raw amino-acid sequence, 681 residues long: DNA ligase (681 aa).

Residues 45-49 (DFDFD), 94-95 (SL), and Glu120 contribute to the NAD(+) site. The active-site N6-AMP-lysine intermediate is Lys122. 4 residues coordinate NAD(+): Arg143, Glu177, Lys289, and Lys313. Positions 403, 406, 421, and 426 each coordinate Zn(2+). In terms of domain architecture, BRCT spans 593–681 (ADQQPFAGQS…SLKIDFKNLI (89 aa)).

Belongs to the NAD-dependent DNA ligase family. LigA subfamily. Requires Mg(2+) as cofactor. Mn(2+) serves as cofactor.

The catalysed reaction is NAD(+) + (deoxyribonucleotide)n-3'-hydroxyl + 5'-phospho-(deoxyribonucleotide)m = (deoxyribonucleotide)n+m + AMP + beta-nicotinamide D-nucleotide.. DNA ligase that catalyzes the formation of phosphodiester linkages between 5'-phosphoryl and 3'-hydroxyl groups in double-stranded DNA using NAD as a coenzyme and as the energy source for the reaction. It is essential for DNA replication and repair of damaged DNA. This chain is DNA ligase, found in Leptospira interrogans serogroup Icterohaemorrhagiae serovar Lai (strain 56601).